We begin with the raw amino-acid sequence, 373 residues long: Chaperone protein DnaJ (373 aa).

One can recognise a J domain in the interval 4-69; the sequence is SYYEILEITQ…EKRAIYDRYG (66 aa). The CR-type zinc-finger motif lies at 135 to 212; it reads GCKKNIDFTY…CKGLGYNESK (78 aa). Residues Cys-148, Cys-151, Cys-164, Cys-167, Cys-186, Cys-189, Cys-200, and Cys-203 each contribute to the Zn(2+) site. CXXCXGXG motif repeat units follow at residues 148 to 155, 164 to 171, 186 to 193, and 200 to 207; these read CKTCNGTG, CPKCQGRG, CPDCQGIG, and CSDCKGLG.

Belongs to the DnaJ family. Homodimer. Requires Zn(2+) as cofactor.

Its subcellular location is the cytoplasm. In terms of biological role, participates actively in the response to hyperosmotic and heat shock by preventing the aggregation of stress-denatured proteins and by disaggregating proteins, also in an autonomous, DnaK-independent fashion. Unfolded proteins bind initially to DnaJ; upon interaction with the DnaJ-bound protein, DnaK hydrolyzes its bound ATP, resulting in the formation of a stable complex. GrpE releases ADP from DnaK; ATP binding to DnaK triggers the release of the substrate protein, thus completing the reaction cycle. Several rounds of ATP-dependent interactions between DnaJ, DnaK and GrpE are required for fully efficient folding. Also involved, together with DnaK and GrpE, in the DNA replication of plasmids through activation of initiation proteins. The sequence is that of Chaperone protein DnaJ from Campylobacter jejuni (strain RM1221).